The sequence spans 245 residues: 1-(5-phosphoribosyl)-5-[(5-phosphoribosylamino)methylideneamino] imidazole-4-carboxamide isomerase (245 aa).

D8 acts as the Proton acceptor in catalysis. The Proton donor role is filled by D129.

Belongs to the HisA/HisF family.

The protein resides in the cytoplasm. The catalysed reaction is 1-(5-phospho-beta-D-ribosyl)-5-[(5-phospho-beta-D-ribosylamino)methylideneamino]imidazole-4-carboxamide = 5-[(5-phospho-1-deoxy-D-ribulos-1-ylimino)methylamino]-1-(5-phospho-beta-D-ribosyl)imidazole-4-carboxamide. It participates in amino-acid biosynthesis; L-histidine biosynthesis; L-histidine from 5-phospho-alpha-D-ribose 1-diphosphate: step 4/9. The polypeptide is 1-(5-phosphoribosyl)-5-[(5-phosphoribosylamino)methylideneamino] imidazole-4-carboxamide isomerase (Trichlorobacter lovleyi (strain ATCC BAA-1151 / DSM 17278 / SZ) (Geobacter lovleyi)).